The primary structure comprises 126 residues: Holo-[acyl-carrier-protein] synthase (126 aa).

Positions 9 and 58 each coordinate Mg(2+).

This sequence belongs to the P-Pant transferase superfamily. AcpS family. Mg(2+) serves as cofactor.

The protein resides in the cytoplasm. It catalyses the reaction apo-[ACP] + CoA = holo-[ACP] + adenosine 3',5'-bisphosphate + H(+). Its function is as follows. Transfers the 4'-phosphopantetheine moiety from coenzyme A to a Ser of acyl-carrier-protein. The polypeptide is Holo-[acyl-carrier-protein] synthase (Escherichia coli (strain K12 / MC4100 / BW2952)).